The chain runs to 747 residues: Probable type III restriction-modification enzyme HindVI Mod subunit (747 aa).

Positions 267-270 are binding of S-adenosyl methionine; it reads DPPY.

It belongs to the N(4)/N(6)-methyltransferase family. Homodimer, also forms a functional restriction-competent complex with Res.

The catalysed reaction is a 2'-deoxyadenosine in DNA + S-adenosyl-L-methionine = an N(6)-methyl-2'-deoxyadenosine in DNA + S-adenosyl-L-homocysteine + H(+). Functionally, a beta subtype methylase that binds the system-specific DNA recognition site 5'-CGAAT-3' and methylates A-4 (of only 1 strand). DNA restriction requires both the Res and Mod subunits. The protein is Probable type III restriction-modification enzyme HindVI Mod subunit of Haemophilus influenzae (strain ATCC 51907 / DSM 11121 / KW20 / Rd).